The chain runs to 172 residues: Ribosome maturation factor RimM (172 aa).

Residues 95–168 (AEGEFYYHQI…RVDVEIMEGL (74 aa)) form the PRC barrel domain.

This sequence belongs to the RimM family. Binds ribosomal protein uS19.

Its subcellular location is the cytoplasm. In terms of biological role, an accessory protein needed during the final step in the assembly of 30S ribosomal subunit, possibly for assembly of the head region. Essential for efficient processing of 16S rRNA. May be needed both before and after RbfA during the maturation of 16S rRNA. It has affinity for free ribosomal 30S subunits but not for 70S ribosomes. The polypeptide is Ribosome maturation factor RimM (Streptococcus equi subsp. zooepidemicus (strain MGCS10565)).